Here is a 166-residue protein sequence, read N- to C-terminus: MSKVIETKQQVVTEIADKLRASKSTIVVDYRGLTVSEATELRKQLREAGVEFKVYKNSLTRRAAESAEMAELNEFLTGPNAIAFSNEDVVAPAKVLNDFAKNHEALEIKAGVIEGKLVTLDEVKAIATLPSREGLLSMLLSVLQAPIRNLALATKAVAEQKEEQGA.

This sequence belongs to the universal ribosomal protein uL10 family. In terms of assembly, part of the ribosomal stalk of the 50S ribosomal subunit. The N-terminus interacts with L11 and the large rRNA to form the base of the stalk. The C-terminus forms an elongated spine to which L12 dimers bind in a sequential fashion forming a multimeric L10(L12)X complex.

Forms part of the ribosomal stalk, playing a central role in the interaction of the ribosome with GTP-bound translation factors. The protein is Large ribosomal subunit protein uL10 of Bacillus cereus (strain G9842).